Here is a 375-residue protein sequence, read N- to C-terminus: Queuine tRNA-ribosyltransferase (375 aa).

D94 acts as the Proton acceptor in catalysis. Substrate is bound by residues 94-98 (DSGGF), D148, Q191, and G218. Residues 249-255 (GVGSPDD) form an RNA binding region. The Nucleophile role is filled by D268. The interval 273–277 (TRIAR) is RNA binding; important for wobble base 34 recognition. Zn(2+)-binding residues include C306, C308, C311, and H337.

The protein belongs to the queuine tRNA-ribosyltransferase family. In terms of assembly, homodimer. Within each dimer, one monomer is responsible for RNA recognition and catalysis, while the other monomer binds to the replacement base PreQ1. The cofactor is Zn(2+).

The enzyme catalyses 7-aminomethyl-7-carbaguanine + guanosine(34) in tRNA = 7-aminomethyl-7-carbaguanosine(34) in tRNA + guanine. Its pathway is tRNA modification; tRNA-queuosine biosynthesis. Functionally, catalyzes the base-exchange of a guanine (G) residue with the queuine precursor 7-aminomethyl-7-deazaguanine (PreQ1) at position 34 (anticodon wobble position) in tRNAs with GU(N) anticodons (tRNA-Asp, -Asn, -His and -Tyr). Catalysis occurs through a double-displacement mechanism. The nucleophile active site attacks the C1' of nucleotide 34 to detach the guanine base from the RNA, forming a covalent enzyme-RNA intermediate. The proton acceptor active site deprotonates the incoming PreQ1, allowing a nucleophilic attack on the C1' of the ribose to form the product. After dissociation, two additional enzymatic reactions on the tRNA convert PreQ1 to queuine (Q), resulting in the hypermodified nucleoside queuosine (7-(((4,5-cis-dihydroxy-2-cyclopenten-1-yl)amino)methyl)-7-deazaguanosine). The sequence is that of Queuine tRNA-ribosyltransferase from Thermoanaerobacter sp. (strain X514).